A 781-amino-acid chain; its full sequence is Chloride channel protein CLC-f (781 aa).

Disordered regions lie at residues 1–41 and 79–98; these read MSSG…QSPA and RERH…EEDG. Residues 10-20 are compositionally biased toward basic and acidic residues; it reads NEDRHLLRSTD. Transmembrane regions (helical) follow at residues 129-149, 184-204, 221-241, 250-270, 279-299, 314-334, 350-370, 388-408, 433-453, 457-477, 502-522, and 523-543; these read WALL…VAGF, ILLI…LLEI, FLAG…LGTG, SVDI…NNRE, GAAS…FFAI, FTTA…NALL, AAEL…SVVF, FGLP…IIAL, APGI…TALC, GLVG…GAVF, ALVG…TSVL, and LLFE…AVGL. A disordered region spans residues 553–584; the sequence is QGKESDSSEGRSTGRGYSSLSPSERKTEGVWR. A compositionally biased stretch (basic and acidic residues) spans 575 to 584; that stretch reads SERKTEGVWR. 2 consecutive CBS domains span residues 621 to 677 and 699 to 763; these read MSKN…NAST and QERG…EMSR. The helical transmembrane segment at 726–746 threads the bilayer; the sequence is QLPVVKRGEVIHKGKRRKLLG.

This sequence belongs to the chloride channel (TC 2.A.49) family. In terms of assembly, homodimer.

The protein localises to the membrane. In terms of biological role, voltage-gated chloride channel. This is Chloride channel protein CLC-f (CLC-F) from Arabidopsis thaliana (Mouse-ear cress).